A 307-amino-acid chain; its full sequence is Histone deacetylase HDT1 (307 aa).

Positions 98 to 112 (EDEMDLDSEDEDEEL) are enriched in acidic residues. Residues 98 to 280 (EDEMDLDSED…KSGGSVPCKP (183 aa)) are disordered. Residues 119-132 (ENGKADEKKQKSQE) are compositionally biased toward basic and acidic residues. Over residues 151–197 (DDDSDEDETDDSDEDETDDSDEGLSSEEGDDDSSDEDDTSDDEEEDT) the composition is skewed to acidic residues. Residues 198 to 211 (PTPKKPEVGKKRPA) are compositionally biased toward basic and acidic residues. Residues 265–277 (SPKSAPKSGGSVP) are compositionally biased toward low complexity. Residues 276–299 (VPCKPCSKSFISETALQAHSRAKM) form a C2H2-type; degenerate zinc finger.

It belongs to the histone deacetylase HD2 family. As to quaternary structure, multimer. Isolated as a trimer composed of 3 proteins of 39, 42 and 45 kDa, possibly a homotrimer with different phosphorylation status or a heterotrimer with HDT2 and/or HDT3. The N-terminus is blocked. Post-translationally, phosphorylated. Required for enzyme activity.

It is found in the nucleus. It localises to the nucleolus. With respect to regulation, inhibited by 3-(4-Aroyl-1-methyl-1H-pyrrol-2-yl)-N-hydroxy-2-propenamides. 3-(1-methyl-4-phenylacetyl-1H-pyrrol-2-yl)-N-hydroxy-2-propenamide 1b and 3-[1-methyl-4-(3-phenyl-2-propenoyl)-1H-pyrrol-2-yl]-N-hydroxy-2-propenamide 1c are very potent inhibitors. Its function is as follows. Mediates the deacetylation of lysine residues on the N-terminal part of the core histones (H2A, H2B, H3 and H4). Histone deacetylation gives a tag for epigenetic repression and plays an important role in transcriptional regulation, cell cycle progression and developmental events. Able to deacetylate all 4 core histones. The protein is Histone deacetylase HDT1 (HDT1) of Zea mays (Maize).